We begin with the raw amino-acid sequence, 780 residues long: Ral guanine nucleotide dissociation stimulator-like 2 (780 aa).

Residues 1–92 (MLPRPLRLLW…PTPPPRSSRR (92 aa)) are disordered. A Phosphoserine modification is found at serine 13. The span at 31–42 (GGGPGGRGVGGG) shows a compositional bias: gly residues. Positions 43–65 (QEEEEEEEEDEAPVSVWDEEEDG) are enriched in acidic residues. Residues 89–213 (SSRRLRAGTL…GSADLIRNLR (125 aa)) enclose the N-terminal Ras-GEF domain. Residues 244–516 (LADHLAEQLT…HRVSCEVEPP (273 aa)) form the Ras-GEF domain. Low complexity predominate over residues 596–613 (HSLADPSHLSPPASSPRP). Disordered regions lie at residues 596–651 (HSLA…GASD) and 741–769 (TATL…PRIK). The region spanning 651-738 (DCRIIRVQME…HDFLLRQRRR (88 aa)) is the Ras-associating domain. Over residues 741-758 (TATLGLTSSPSASGTPPS) the composition is skewed to low complexity.

As to quaternary structure, interacts with SAMD9.

Functionally, probable guanine nucleotide exchange factor. Putative effector of Ras and/or Rap. Associates with the GTP-bound form of Rap 1A and H-Ras in vitro. In Canis lupus familiaris (Dog), this protein is Ral guanine nucleotide dissociation stimulator-like 2 (RGL2).